Consider the following 294-residue polypeptide: Nucleotide-binding protein LCA_0526 (294 aa).

12-19 (GMSGAGKT) serves as a coordination point for ATP. 62-65 (DLRS) contributes to the GTP binding site.

It belongs to the RapZ-like family.

Its function is as follows. Displays ATPase and GTPase activities. This Latilactobacillus sakei subsp. sakei (strain 23K) (Lactobacillus sakei subsp. sakei) protein is Nucleotide-binding protein LCA_0526.